The primary structure comprises 858 residues: Myosin-K heavy chain (858 aa).

In terms of domain architecture, Myosin motor spans 7-820; the sequence is SGVDDLVLVS…TIFVMEDLLM (814 aa). 100-107 serves as a coordination point for ATP; sequence GESGAGKT. The disordered stretch occupies residues 121-265; the sequence is SPNNSSGGGI…GGGYGGSSKT (145 aa). Composition is skewed to gly residues over residues 126–139 and 157–182; these read SGGG…GNGG and RGMG…SRGG. Positions 183–228 are enriched in pro residues; it reads GPPPTRGRGGPPPPIPQNRGAPPPVSNGGAPPPVARGPVAPPPTRG. Positions 233–245 are enriched in gly residues; the sequence is RGGGPANRGGRGG. Residues 712 to 722 are actin-binding; it reads PHYIRCIKPND. Residues 821–858 are tail; the sequence is QKIDPIGYKNRVQAYKENEKLAQMKQGKHSMKQKCLIQ.

The protein belongs to the TRAFAC class myosin-kinesin ATPase superfamily. Myosin family.

The protein localises to the cytoplasm. Functionally, myosins are actin-based motor molecules with ATPase activity. Involved in phagocytosis and motility, and in the maintenance and dynamics of cell cortex. In Dictyostelium discoideum (Social amoeba), this protein is Myosin-K heavy chain (myoK).